The chain runs to 425 residues: Serine--tRNA ligase (425 aa).

Threonine 233–glutamate 235 contacts L-serine. Arginine 264–glutamate 266 contributes to the ATP binding site. Residue glutamate 287 participates in L-serine binding. Glutamate 351 to serine 354 serves as a coordination point for ATP. Residue serine 387 participates in L-serine binding.

Belongs to the class-II aminoacyl-tRNA synthetase family. Type-1 seryl-tRNA synthetase subfamily. In terms of assembly, homodimer. The tRNA molecule binds across the dimer.

The protein localises to the cytoplasm. The enzyme catalyses tRNA(Ser) + L-serine + ATP = L-seryl-tRNA(Ser) + AMP + diphosphate + H(+). It catalyses the reaction tRNA(Sec) + L-serine + ATP = L-seryl-tRNA(Sec) + AMP + diphosphate + H(+). The protein operates within aminoacyl-tRNA biosynthesis; selenocysteinyl-tRNA(Sec) biosynthesis; L-seryl-tRNA(Sec) from L-serine and tRNA(Sec): step 1/1. Functionally, catalyzes the attachment of serine to tRNA(Ser). Is also able to aminoacylate tRNA(Sec) with serine, to form the misacylated tRNA L-seryl-tRNA(Sec), which will be further converted into selenocysteinyl-tRNA(Sec). This Thermotoga sp. (strain RQ2) protein is Serine--tRNA ligase.